The chain runs to 585 residues: Parathyroid hormone/parathyroid hormone-related peptide receptor (585 aa).

Residues 1–26 (MGAPRISHSLALLLCCSVLSSVYALV) form the signal peptide. Over 27-185 (DADDVITKEE…REREVFDRLG (159 aa)) the chain is Extracellular. Cystine bridges form between C48–C114, C105–C145, and C128–C167. The segment at 69-90 (MSRSAKTKKEKPAEKLYSQAEE) is disordered. Residues N148, N158, N163, and N173 are each glycosylated (N-linked (GlcNAc...) asparagine). A helical membrane pass occupies residues 186 to 209 (MIYTVGYSISLGSLTVAVLILGYF). Residues 210-216 (RRLHCTR) are Cytoplasmic-facing. Residues 217–236 (NYIHMHLFVSFMLRAVSIFI) traverse the membrane as a helical segment. Residues 237-276 (KDAVLYSGVSTDEIERITEEELRAFTEPPPADKAGFVGCR) lie on the Extracellular side of the membrane. A helical membrane pass occupies residues 277 to 300 (VAVTVFLYFLTTNYYWILVEGLYL). The Cytoplasmic segment spans residues 301 to 314 (HSLIFMAFFSEKKY). The helical transmembrane segment at 315 to 336 (LWGFTLFGWGLPAVFVAVWVTV) threads the bilayer. At 337-355 (RATLANTECWDLSSGNKKW) the chain is on the extracellular side. The helical transmembrane segment at 356–376 (IIQVPILAAIVVNFILFINII) threads the bilayer. The Cytoplasmic portion of the chain corresponds to 377 to 403 (RVLATKLRETNAGRCDTRQQYRKLLKS). The chain crosses the membrane as a helical span at residues 404–422 (TLVLMPLFGVHYIVFMATP). Topologically, residues 423–434 (YTEVSGILWQVQ) are extracellular. A helical transmembrane segment spans residues 435-457 (MHYEMLFNSFQGFFVAIIYCFCN). Residues 458-585 (GEVQAEIKKS…LLEEERETVM (128 aa)) lie on the Cytoplasmic side of the membrane. The short motif at 468 to 471 (WSRW) is the Important for interaction with G proteins element. The tract at residues 531-585 (PGYVKHGSISENSLPSSGPEPGTKDDGYLNGSGLYEPMVGEQPPPLLEEERETVM) is disordered.

Belongs to the G-protein coupled receptor 2 family. In terms of assembly, homodimer in the absence of bound ligand. Peptide hormone binding leads to dissociation of the homodimer. In terms of processing, N-glycosylated.

Its subcellular location is the cell membrane. Functionally, G-protein-coupled receptor for parathyroid hormone (PTH) and for parathyroid hormone-related peptide (PTHLH). Ligand binding causes a conformation change that triggers signaling via guanine nucleotide-binding proteins (G proteins) and modulates the activity of downstream effectors, such as adenylate cyclase (cAMP). PTH1R is coupled to G(s) G alpha proteins and mediates activation of adenylate cyclase activity. PTHLH dissociates from PTH1R more rapidly than PTH; as consequence, the cAMP response induced by PTHLH decays faster than the response induced by PTH. This chain is Parathyroid hormone/parathyroid hormone-related peptide receptor (PTH1R), found in Didelphis virginiana (North American opossum).